The chain runs to 264 residues: Zinc transporter ZupT (264 aa).

Helical transmembrane passes span 8 to 28 (AFIL…IAFV), 36 to 56 (FLSV…MIEI), 75 to 95 (WLTV…DKLI), 121 to 141 (GLMT…ATFI), and 148 to 168 (SIAI…GIAV). Fe(2+) contacts are provided by N132 and E135. E135 and H160 together coordinate Zn(2+). Residues N161, E164, and E193 each coordinate Fe(2+). E164 serves as a coordination point for Zn(2+). Helical transmembrane passes span 197–217 (AIIG…GAIF), 219–239 (AVAG…AEEY), and 244–264 (LAIY…LLFI).

It belongs to the ZIP transporter (TC 2.A.5) family. ZupT subfamily.

Its subcellular location is the cell membrane. It catalyses the reaction Zn(2+)(in) = Zn(2+)(out). Functionally, mediates zinc uptake. May also transport other divalent cations. In Streptococcus mutans serotype c (strain ATCC 700610 / UA159), this protein is Zinc transporter ZupT.